Consider the following 393-residue polypeptide: Formate-dependent phosphoribosylglycinamide formyltransferase (393 aa).

N(1)-(5-phospho-beta-D-ribosyl)glycinamide is bound by residues E22–L23 and E82. ATP is bound by residues R114, K155, S160–Q165, E195–V198, and E203. Residues R119–L308 form the ATP-grasp domain. The Mg(2+) site is built by E267 and E279. Residues D286, K355, and R362–R363 each bind N(1)-(5-phospho-beta-D-ribosyl)glycinamide.

The protein belongs to the PurK/PurT family. As to quaternary structure, homodimer.

It catalyses the reaction N(1)-(5-phospho-beta-D-ribosyl)glycinamide + formate + ATP = N(2)-formyl-N(1)-(5-phospho-beta-D-ribosyl)glycinamide + ADP + phosphate + H(+). It participates in purine metabolism; IMP biosynthesis via de novo pathway; N(2)-formyl-N(1)-(5-phospho-D-ribosyl)glycinamide from N(1)-(5-phospho-D-ribosyl)glycinamide (formate route): step 1/1. Functionally, involved in the de novo purine biosynthesis. Catalyzes the transfer of formate to 5-phospho-ribosyl-glycinamide (GAR), producing 5-phospho-ribosyl-N-formylglycinamide (FGAR). Formate is provided by PurU via hydrolysis of 10-formyl-tetrahydrofolate. This is Formate-dependent phosphoribosylglycinamide formyltransferase from Yersinia pseudotuberculosis serotype IB (strain PB1/+).